A 466-amino-acid chain; its full sequence is Histidine--tRNA ligase (466 aa).

The protein belongs to the class-II aminoacyl-tRNA synthetase family. As to quaternary structure, homodimer.

It is found in the cytoplasm. The catalysed reaction is tRNA(His) + L-histidine + ATP = L-histidyl-tRNA(His) + AMP + diphosphate + H(+). This chain is Histidine--tRNA ligase (hisS), found in Bifidobacterium longum (strain NCC 2705).